The chain runs to 299 residues: F-actin-capping protein subunit alpha-3 (299 aa).

At serine 290 the chain carries Phosphoserine.

It belongs to the F-actin-capping protein alpha subunit family. As to quaternary structure, component of the F-actin capping complex, composed of a heterodimer of an alpha and a beta subunit. Component of the WASH complex, composed of F-actin-capping protein subunit alpha (CAPZA1, CAPZA2 or CAPZA3), F-actin-capping protein subunit beta (CAPZB), WASH (WASHC1, WASH2P, WASH3P, WASH4P, WASH5P or WASH6P), WASHC2 (WASHC2A or WASHC2C), WASHC3, WASHC4 and WASHC5. In terms of tissue distribution, expressed exclusively in testis and sperm. Highest expression is found in the neck region of ejaculated sperm with lower levels found in the tail and postacrosome region.

Its subcellular location is the cytoplasm. It localises to the cytoskeleton. F-actin-capping proteins bind in a Ca(2+)-independent manner to the fast growing ends of actin filaments (barbed end) thereby blocking the exchange of subunits at these ends. Unlike other capping proteins (such as gelsolin and severin), these proteins do not sever actin filaments. May play a role in the morphogenesis of spermatid. The chain is F-actin-capping protein subunit alpha-3 (CAPZA3) from Homo sapiens (Human).